A 407-amino-acid chain; its full sequence is Tryptophan synthase beta chain (407 aa).

An N6-(pyridoxal phosphate)lysine modification is found at K91.

This sequence belongs to the TrpB family. As to quaternary structure, tetramer of two alpha and two beta chains. The cofactor is pyridoxal 5'-phosphate.

It catalyses the reaction (1S,2R)-1-C-(indol-3-yl)glycerol 3-phosphate + L-serine = D-glyceraldehyde 3-phosphate + L-tryptophan + H2O. It functions in the pathway amino-acid biosynthesis; L-tryptophan biosynthesis; L-tryptophan from chorismate: step 5/5. Its function is as follows. The beta subunit is responsible for the synthesis of L-tryptophan from indole and L-serine. This chain is Tryptophan synthase beta chain, found in Streptococcus pneumoniae serotype 2 (strain D39 / NCTC 7466).